Consider the following 319-residue polypeptide: Polyprenyl transferase macG (319 aa).

The next 9 membrane-spanning stretches (helical) occupy residues 28–45, 48–68, 106–126, 127–147, 152–172, 182–202, 224–244, 249–269, and 289–309; these read AWLCWYPAIWGACVAAGM, VSLELAPFLRLLFGIWASVTA, AVVAFICWLPVTLAITWGTLG, PAVMAGFIPVWVLSTIYPFMK, FPQVVLGAIIGGAVFPGWVGI, ALPLFFATASWVVYFDVFYAT, VQILLAVLGALQVLLFAVTAL, SLIFWVLGLGVWMVNVPWHIL, and LGLYLTGVSLLELFVVRVYDI.

This sequence belongs to the UbiA prenyltransferase family. Mg(2+) is required as a cofactor.

The protein resides in the membrane. It functions in the pathway secondary metabolite biosynthesis; terpenoid biosynthesis. In terms of biological role, polyprenyl transferase; part of the gene cluster that mediates the biosynthesis of macrophorins, isoprenoid epoxycyclohexenones containing cyclized drimane moieties. The first step of the pathway is the synthesis of 6-methylsalicylic acid (6-MSA) by the polyketide synthase macA. 6-MSA is then converted to m-cresol by the decarboxylase macB. The cytochrome P450 monooxygenase macC then catalyzes the oxidation of m-cresol to toluquinol. Epoxidation of toluquinol is then performed by the short chain dehydrogenase macD, with the help of macE, and a further prenylation by macG leads to 7-deacetoxyyanuthone A. The next step is the hydroxylation of C-22 of 7-deacetoxyyanuthone A by the cytochrome P450 monooxygenase macH to yield 22-deacetylyanuthone A. O-Mevalon transferase macI then attaches mevalon to the hydroxyl group of 22-deacetylyanuthone A to produce yanuthone E. The terpene cyclase macJ catalyzes the cyclization of 22-deacetylyanuthone A to macrophorin A. MacJ is also able to catalyze cyclization of yanuthone E and 7-deacetoxyyanuthone A to their corresponding macrophorins. The macJ products can be further modified by macH and macJ, as well as by the FAD-dependent monooxygenase macF, to produce additional macrophorins, including 4'-oxomacrophorin A, 4'-oxomacrophorin D and 4'-oxomacrophorin E. This Penicillium terrestre protein is Polyprenyl transferase macG.